The sequence spans 217 residues: Secreted RxLR effector protein 147 (217 aa).

Residues 1-23 (MRGAFYVTTALLITNSIRTAAEA) form the signal peptide. The interval 22–52 (EANPPGRQPMSHHDGVVPGKSSPRRFLQGSH) is disordered. The short motif at 46–67 (RFLQGSHEPHDKFAVSAANEER) is the RxLR-dEER element.

This sequence belongs to the RxLR effector family.

It is found in the secreted. The protein resides in the host nucleus. Its subcellular location is the host cytoplasm. Functionally, secreted effector that completely suppresses the host cell death induced by cell death-inducing proteins. The sequence is that of Secreted RxLR effector protein 147 from Plasmopara viticola (Downy mildew of grapevine).